A 37-amino-acid polypeptide reads, in one-letter code: Cytochrome b6-f complex subunit 5 (37 aa).

A helical transmembrane segment spans residues 5-25; sequence LLSGIVLGMIPITLAGLFVTA.

The protein belongs to the PetG family. The 4 large subunits of the cytochrome b6-f complex are cytochrome b6, subunit IV (17 kDa polypeptide, PetD), cytochrome f and the Rieske protein, while the 4 small subunits are PetG, PetL, PetM and PetN. The complex functions as a dimer.

Its subcellular location is the plastid. The protein localises to the chloroplast thylakoid membrane. Its function is as follows. Component of the cytochrome b6-f complex, which mediates electron transfer between photosystem II (PSII) and photosystem I (PSI), cyclic electron flow around PSI, and state transitions. PetG is required for either the stability or assembly of the cytochrome b6-f complex. The polypeptide is Cytochrome b6-f complex subunit 5 (Mesostigma viride (Green alga)).